The sequence spans 429 residues: Adenylosuccinate synthetase (429 aa).

Residues 12–18 (GDEGKGK) and 40–42 (GHT) each bind GTP. Residue Asp13 is the Proton acceptor of the active site. Positions 13 and 40 each coordinate Mg(2+). Residues 13–16 (DEGK), 38–41 (NAGH), Thr129, Arg143, Gln223, Thr238, and Arg302 each bind IMP. Catalysis depends on His41, which acts as the Proton donor. A substrate-binding site is contributed by 298 to 304 (TVTGRPR). GTP contacts are provided by residues Arg304, 330 to 332 (KLD), and 412 to 414 (STS).

Belongs to the adenylosuccinate synthetase family. Homodimer. Requires Mg(2+) as cofactor.

Its subcellular location is the cytoplasm. It carries out the reaction IMP + L-aspartate + GTP = N(6)-(1,2-dicarboxyethyl)-AMP + GDP + phosphate + 2 H(+). Its pathway is purine metabolism; AMP biosynthesis via de novo pathway; AMP from IMP: step 1/2. Its function is as follows. Plays an important role in the de novo pathway of purine nucleotide biosynthesis. Catalyzes the first committed step in the biosynthesis of AMP from IMP. This is Adenylosuccinate synthetase from Paramagnetospirillum magneticum (strain ATCC 700264 / AMB-1) (Magnetospirillum magneticum).